Reading from the N-terminus, the 610-residue chain is DNA mismatch repair protein MutL (610 aa).

The protein belongs to the DNA mismatch repair MutL/HexB family.

In terms of biological role, this protein is involved in the repair of mismatches in DNA. It is required for dam-dependent methyl-directed DNA mismatch repair. May act as a 'molecular matchmaker', a protein that promotes the formation of a stable complex between two or more DNA-binding proteins in an ATP-dependent manner without itself being part of a final effector complex. This chain is DNA mismatch repair protein MutL, found in Rickettsia rickettsii (strain Sheila Smith).